Reading from the N-terminus, the 943-residue chain is Leucine--tRNA ligase (943 aa).

Residues 40–51 (PYPSGAGLHVGH) carry the 'HIGH' region motif. Positions 717–721 (KMSKS) match the 'KMSKS' region motif. Lysine 720 lines the ATP pocket.

This sequence belongs to the class-I aminoacyl-tRNA synthetase family.

Its subcellular location is the cytoplasm. It carries out the reaction tRNA(Leu) + L-leucine + ATP = L-leucyl-tRNA(Leu) + AMP + diphosphate. This Bacteroides fragilis (strain ATCC 25285 / DSM 2151 / CCUG 4856 / JCM 11019 / LMG 10263 / NCTC 9343 / Onslow / VPI 2553 / EN-2) protein is Leucine--tRNA ligase.